A 296-amino-acid chain; its full sequence is Cholesterol ring-cleaving hydrolase IpdA subunit (296 aa).

This sequence belongs to the 3-oxoacid CoA-transferase subunit A family. Heterotetramer composed of 2 IpdA subunits and 2 IpdB subunits.

It carries out the reaction (3E)-2-(2-carboxylatoethyl)-3-methyl-6-oxocyclohex-1-ene-1-carboxyl-CoA + H2O = 6-methyl-3,7-dioxodecanedioyl-CoA. It functions in the pathway steroid metabolism; cholesterol degradation. Its function is as follows. Involved in the final steps of cholesterol and steroid degradation. Opens the last steroid ring of cholesterol by catalyzing the hydrolysis of (3E)-2-(2-carboxylatoethyl)-3-methyl-6-oxocyclohex-1-ene-1-carboxyl-CoA (COCHEA-CoA) to 6-methyl-3,7-dioxodecanedioyl-CoA (MeDODA-CoA). The chain is Cholesterol ring-cleaving hydrolase IpdA subunit from Rhodococcus jostii (strain RHA1).